The primary structure comprises 500 residues: L-arabinose isomerase (500 aa).

The Mn(2+) site is built by Glu-306, Glu-333, His-350, and His-450.

Belongs to the arabinose isomerase family. As to quaternary structure, homohexamer. Mn(2+) is required as a cofactor.

The catalysed reaction is beta-L-arabinopyranose = L-ribulose. It functions in the pathway carbohydrate degradation; L-arabinose degradation via L-ribulose; D-xylulose 5-phosphate from L-arabinose (bacterial route): step 1/3. Catalyzes the conversion of L-arabinose to L-ribulose. The sequence is that of L-arabinose isomerase from Shigella flexneri serotype 5b (strain 8401).